The following is a 299-amino-acid chain: Trans-aconitate 3-methyltransferase (299 aa).

Residue Ser2 is modified to N-acetylserine.

It belongs to the methyltransferase superfamily. Tam family.

It is found in the cytoplasm. It carries out the reaction trans-aconitate + S-adenosyl-L-methionine = (E)-2-(methoxycarbonylmethyl)but-2-enedioate + S-adenosyl-L-homocysteine. Catalyzes the S-adenosylmethionine monomethyl esterification of trans-aconitate and 3-isopropylmalate at high affinity and of other molecules like cis-aconitate, isocitrate, and citrate at lower velocities and affinities. The function of trans-aconitate methylation appears to be in reducing the toxicity of this spontaneous breakdown product of cis-aconitate. The role of 3-isopropylmalate methylation is unclear but may represent a metabolic branch at 3-isopropylmalate, where some of the material is taken in the pathway leading to leucine and some is taken in a pathway to the 3-isopropylmalate methyl ester, a molecule that provides a signal to switch from vegetative to invasive growth in response to amino acid starvation. The sequence is that of Trans-aconitate 3-methyltransferase (TMT1) from Saccharomyces cerevisiae (strain YJM789) (Baker's yeast).